Reading from the N-terminus, the 305-residue chain is Ribosomal RNA small subunit methyltransferase H (305 aa).

Residues 33-35 (GGH), aspartate 52, aspartate 97, and glutamine 104 each bind S-adenosyl-L-methionine.

It belongs to the methyltransferase superfamily. RsmH family.

It localises to the cytoplasm. The catalysed reaction is cytidine(1402) in 16S rRNA + S-adenosyl-L-methionine = N(4)-methylcytidine(1402) in 16S rRNA + S-adenosyl-L-homocysteine + H(+). Functionally, specifically methylates the N4 position of cytidine in position 1402 (C1402) of 16S rRNA. This chain is Ribosomal RNA small subunit methyltransferase H, found in Campylobacter lari (strain RM2100 / D67 / ATCC BAA-1060).